The following is a 403-amino-acid chain: Tripartite motif-containing protein 59 (403 aa).

Residues 10–60 (CPICYSIFEDPRVLPCSHTFCRNCLENVLQASGNFYIWRPLRIPLKCPNCR) form an RING-type zinc finger. Residues 92–134 (PDVVTCPEHYRQPLNVYCLLDKKLVCGHCLTIGQHHGHPIDDL) form a B box-type zinc finger. Positions 97, 100, 120, and 126 each coordinate Zn(2+). The stretch at 163–246 (LIEKLEEQKC…TITTSLQDES (84 aa)) forms a coiled coil. The chain crosses the membrane as a helical span at residues 329 to 349 (ILNIAIVSLISVILMLILLFN).

This sequence belongs to the TRIM/RBCC family. As to quaternary structure, interacts with ECSIT. In terms of tissue distribution, moderately expressed in the spleen, brain and heart and very highly expressed in the testis.

It localises to the endoplasmic reticulum membrane. It catalyses the reaction S-ubiquitinyl-[E2 ubiquitin-conjugating enzyme]-L-cysteine + [acceptor protein]-L-lysine = [E2 ubiquitin-conjugating enzyme]-L-cysteine + N(6)-ubiquitinyl-[acceptor protein]-L-lysine.. The protein operates within protein modification; protein ubiquitination. Functionally, E3 ubiquitin ligase involved in different processes such as development and immune response. Serves as a negative regulator for innate immune signaling pathways by suppressing RLR-induced activation of IRF3/7 and NF-kappa-B via interaction with adapter ECSIT. Regulates autophagy through modulating both the transcription and the ubiquitination of BECN1. On the one hand, regulates the transcription of BECN1 through negatively modulating the NF-kappa-B pathway. On the other hand, regulates TRAF6-mediated 'Lys-63'-linked ubiquitination of BECN1, thus affecting the formation of the BECN1-PIK3C3 complex. In addition, mediates 'Lys-48'-linked ubiquitination of TRAF6 and thereby promotes TRAF6 proteasomal degradation. Also acts as a critical regulator for early embryo development from blastocyst stage to gastrula through modulating F-actin assembly and WASH1 'Lys-63'-linked ubiquitination. This chain is Tripartite motif-containing protein 59 (Trim59), found in Mus musculus (Mouse).